The chain runs to 169 residues: Phosphopantetheine adenylyltransferase (169 aa).

A substrate-binding site is contributed by T9. ATP is bound by residues 9–10 and H17; that span reads TF. K41, L73, and R87 together coordinate substrate. Residues 88–90, E98, and 123–129 contribute to the ATP site; these read GLR and YQFISGT.

The protein belongs to the bacterial CoaD family. As to quaternary structure, homohexamer. Requires Mg(2+) as cofactor.

It localises to the cytoplasm. The catalysed reaction is (R)-4'-phosphopantetheine + ATP + H(+) = 3'-dephospho-CoA + diphosphate. It functions in the pathway cofactor biosynthesis; coenzyme A biosynthesis; CoA from (R)-pantothenate: step 4/5. In terms of biological role, reversibly transfers an adenylyl group from ATP to 4'-phosphopantetheine, yielding dephospho-CoA (dPCoA) and pyrophosphate. This is Phosphopantetheine adenylyltransferase from Bordetella bronchiseptica (strain ATCC BAA-588 / NCTC 13252 / RB50) (Alcaligenes bronchisepticus).